We begin with the raw amino-acid sequence, 116 residues long: Anti-sigma F factor antagonist (116 aa).

One can recognise an STAS domain in the interval 3 to 113 (LAIDLEVKKD…ESEQYALHRL (111 aa)). S58 is subject to Phosphoserine.

Belongs to the anti-sigma-factor antagonist family. In terms of processing, phosphorylated by SpoIIAB on a serine residue.

In the phosphorylated form it could act as an anti-anti-sigma factor that counteracts SpoIIAB and thus releases sigma f from inhibition. This Heyndrickxia coagulans (Weizmannia coagulans) protein is Anti-sigma F factor antagonist (spoIIAA).